Here is a 265-residue protein sequence, read N- to C-terminus: Transcription factor LBX1b (265 aa).

The homeobox DNA-binding region spans 121–180 (RRKSRTAFTNHQLYELEKRFLHQKYLSPADRDQIAHQLGLTNAQVITWFQNRRAKLKRDL).

Its subcellular location is the nucleus. Transcription factor required for the development of hypaxial muscles. The protein is Transcription factor LBX1b of Danio rerio (Zebrafish).